A 155-amino-acid polypeptide reads, in one-letter code: UPF0735 ACT domain-containing protein CA_C1234 (155 aa).

The 76-residue stretch at 79-154 folds into the ACT domain; the sequence is TISILIEHRR…NVLKVEIVAM (76 aa).

This sequence belongs to the UPF0735 family.

This chain is UPF0735 ACT domain-containing protein CA_C1234, found in Clostridium acetobutylicum (strain ATCC 824 / DSM 792 / JCM 1419 / IAM 19013 / LMG 5710 / NBRC 13948 / NRRL B-527 / VKM B-1787 / 2291 / W).